Here is a 438-residue protein sequence, read N- to C-terminus: Methylenetetrahydrofolate--tRNA-(uracil-5-)-methyltransferase TrmFO (438 aa).

Position 9–14 (9–14 (GGGLAG)) interacts with FAD.

This sequence belongs to the MnmG family. TrmFO subfamily. FAD serves as cofactor.

It localises to the cytoplasm. The catalysed reaction is uridine(54) in tRNA + (6R)-5,10-methylene-5,6,7,8-tetrahydrofolate + NADH + H(+) = 5-methyluridine(54) in tRNA + (6S)-5,6,7,8-tetrahydrofolate + NAD(+). It catalyses the reaction uridine(54) in tRNA + (6R)-5,10-methylene-5,6,7,8-tetrahydrofolate + NADPH + H(+) = 5-methyluridine(54) in tRNA + (6S)-5,6,7,8-tetrahydrofolate + NADP(+). Catalyzes the folate-dependent formation of 5-methyl-uridine at position 54 (M-5-U54) in all tRNAs. In Lactobacillus gasseri (strain ATCC 33323 / DSM 20243 / BCRC 14619 / CIP 102991 / JCM 1131 / KCTC 3163 / NCIMB 11718 / NCTC 13722 / AM63), this protein is Methylenetetrahydrofolate--tRNA-(uracil-5-)-methyltransferase TrmFO.